The following is a 130-amino-acid chain: Small ribosomal subunit protein uS8 (130 aa).

This sequence belongs to the universal ribosomal protein uS8 family. In terms of assembly, part of the 30S ribosomal subunit. Contacts proteins S5 and S12.

Its function is as follows. One of the primary rRNA binding proteins, it binds directly to 16S rRNA central domain where it helps coordinate assembly of the platform of the 30S subunit. The protein is Small ribosomal subunit protein uS8 of Vibrio parahaemolyticus serotype O3:K6 (strain RIMD 2210633).